A 121-amino-acid chain; its full sequence is Small ribosomal subunit protein uS13 (121 aa).

The disordered stretch occupies residues 94-121 (GLPLRGQRTRTNARTRKGPRRAAQALKK).

This sequence belongs to the universal ribosomal protein uS13 family. Part of the 30S ribosomal subunit. Forms a loose heterodimer with protein S19. Forms two bridges to the 50S subunit in the 70S ribosome.

In terms of biological role, located at the top of the head of the 30S subunit, it contacts several helices of the 16S rRNA. In the 70S ribosome it contacts the 23S rRNA (bridge B1a) and protein L5 of the 50S subunit (bridge B1b), connecting the 2 subunits; these bridges are implicated in subunit movement. Contacts the tRNAs in the A and P-sites. The protein is Small ribosomal subunit protein uS13 of Burkholderia mallei (strain NCTC 10247).